The primary structure comprises 83 residues: RNA-binding protein Hfq (83 aa).

Positions 10–70 constitute a Sm domain; sequence DAFLNQLRKE…ISTVSPSRPV (61 aa).

The protein belongs to the Hfq family. In terms of assembly, homohexamer.

RNA chaperone that binds small regulatory RNA (sRNAs) and mRNAs to facilitate mRNA translational regulation in response to envelope stress, environmental stress and changes in metabolite concentrations. Also binds with high specificity to tRNAs. This is RNA-binding protein Hfq from Desulforudis audaxviator (strain MP104C).